Reading from the N-terminus, the 306-residue chain is tRNA-cytidine(32) 2-sulfurtransferase (306 aa).

A PP-loop motif motif is present at residues 44-49 (SGGKDS). The [4Fe-4S] cluster site is built by C119, C122, and C210.

The protein belongs to the TtcA family. Homodimer. Mg(2+) serves as cofactor. The cofactor is [4Fe-4S] cluster.

It localises to the cytoplasm. The catalysed reaction is cytidine(32) in tRNA + S-sulfanyl-L-cysteinyl-[cysteine desulfurase] + AH2 + ATP = 2-thiocytidine(32) in tRNA + L-cysteinyl-[cysteine desulfurase] + A + AMP + diphosphate + H(+). The protein operates within tRNA modification. Functionally, catalyzes the ATP-dependent 2-thiolation of cytidine in position 32 of tRNA, to form 2-thiocytidine (s(2)C32). The sulfur atoms are provided by the cysteine/cysteine desulfurase (IscS) system. This is tRNA-cytidine(32) 2-sulfurtransferase from Photorhabdus laumondii subsp. laumondii (strain DSM 15139 / CIP 105565 / TT01) (Photorhabdus luminescens subsp. laumondii).